Reading from the N-terminus, the 93-residue chain is RNA-binding protein Hfq (93 aa).

The Sm domain occupies 11–71 (DVFLNHVRKS…ISTVMPGAPI (61 aa)).

This sequence belongs to the Hfq family. Homohexamer.

RNA chaperone that binds small regulatory RNA (sRNAs) and mRNAs to facilitate mRNA translational regulation in response to envelope stress, environmental stress and changes in metabolite concentrations. Also binds with high specificity to tRNAs. The polypeptide is RNA-binding protein Hfq (Granulibacter bethesdensis (strain ATCC BAA-1260 / CGDNIH1)).